A 277-amino-acid polypeptide reads, in one-letter code: Acetyl-coenzyme A carboxylase carboxyl transferase subunit beta (277 aa).

Positions 22-277 constitute a CoA carboxyltransferase N-terminal domain; sequence LWTKCPGCNR…TLKQLLYFLT (256 aa). Residues C26, C29, C45, and C48 each coordinate Zn(2+). Residues 26–48 form a C4-type zinc finger; that stretch reads CPGCNRFLYTKELELNQSVCHYC.

This sequence belongs to the AccD/PCCB family. Acetyl-CoA carboxylase is a heterohexamer composed of biotin carboxyl carrier protein (AccB), biotin carboxylase (AccC) and two subunits each of ACCase subunit alpha (AccA) and ACCase subunit beta (AccD). The cofactor is Zn(2+).

Its subcellular location is the cytoplasm. It catalyses the reaction N(6)-carboxybiotinyl-L-lysyl-[protein] + acetyl-CoA = N(6)-biotinyl-L-lysyl-[protein] + malonyl-CoA. The protein operates within lipid metabolism; malonyl-CoA biosynthesis; malonyl-CoA from acetyl-CoA: step 1/1. In terms of biological role, component of the acetyl coenzyme A carboxylase (ACC) complex. Biotin carboxylase (BC) catalyzes the carboxylation of biotin on its carrier protein (BCCP) and then the CO(2) group is transferred by the transcarboxylase to acetyl-CoA to form malonyl-CoA. This is Acetyl-coenzyme A carboxylase carboxyl transferase subunit beta from Methylacidiphilum infernorum (isolate V4) (Methylokorus infernorum (strain V4)).